A 596-amino-acid chain; its full sequence is Arginine--tRNA ligase (596 aa).

The 'HIGH' region signature appears at 135-145; that stretch reads ANPTGPIHIGG. A disordered region spans residues 227 to 249; the sequence is PRVDGGADQDGNPLGEGDSEQRE.

It belongs to the class-I aminoacyl-tRNA synthetase family. Monomer.

The protein resides in the cytoplasm. It carries out the reaction tRNA(Arg) + L-arginine + ATP = L-arginyl-tRNA(Arg) + AMP + diphosphate. The polypeptide is Arginine--tRNA ligase (Bifidobacterium adolescentis (strain ATCC 15703 / DSM 20083 / NCTC 11814 / E194a)).